A 340-amino-acid polypeptide reads, in one-letter code: Ornithine carbamoyltransferase (340 aa).

Carbamoyl phosphate is bound by residues 57–60 (STRT), Gln-84, Arg-108, and 135–138 (HPTQ). L-ornithine-binding positions include Asn-167, Asp-231, and 235 to 236 (SM). Carbamoyl phosphate is bound by residues 272–273 (CL) and Arg-317.

Belongs to the aspartate/ornithine carbamoyltransferase superfamily. OTCase family.

It is found in the cytoplasm. The enzyme catalyses carbamoyl phosphate + L-ornithine = L-citrulline + phosphate + H(+). Its pathway is amino-acid biosynthesis; L-arginine biosynthesis; L-arginine from L-ornithine and carbamoyl phosphate: step 1/3. In terms of biological role, reversibly catalyzes the transfer of the carbamoyl group from carbamoyl phosphate (CP) to the N(epsilon) atom of ornithine (ORN) to produce L-citrulline. The protein is Ornithine carbamoyltransferase (argF) of Lactiplantibacillus plantarum (strain ATCC BAA-793 / NCIMB 8826 / WCFS1) (Lactobacillus plantarum).